A 105-amino-acid chain; its full sequence is Small ribosomal subunit protein uS10c (105 aa).

It belongs to the universal ribosomal protein uS10 family. As to quaternary structure, part of the 30S ribosomal subunit.

It is found in the plastid. The protein resides in the chloroplast. Functionally, involved in the binding of tRNA to the ribosomes. The polypeptide is Small ribosomal subunit protein uS10c (Porphyra purpurea (Red seaweed)).